The sequence spans 158 residues: Transcription elongation factor GreA (158 aa).

Residues 47 to 74 are a coiled coil; sequence AEYHAAKEEQSHNEGRIAELEDKLARAD.

Belongs to the GreA/GreB family.

In terms of biological role, necessary for efficient RNA polymerase transcription elongation past template-encoded arresting sites. The arresting sites in DNA have the property of trapping a certain fraction of elongating RNA polymerases that pass through, resulting in locked ternary complexes. Cleavage of the nascent transcript by cleavage factors such as GreA or GreB allows the resumption of elongation from the new 3'terminus. GreA releases sequences of 2 to 3 nucleotides. This is Transcription elongation factor GreA from Nitrobacter winogradskyi (strain ATCC 25391 / DSM 10237 / CIP 104748 / NCIMB 11846 / Nb-255).